Here is a 344-residue protein sequence, read N- to C-terminus: Follistatin (344 aa).

The signal sequence occupies residues 1-29 (MARPRHQPGGLCLLLLLLCQFMEDRSAQA). The TB domain maps to 30-103 (GNCWLRQAKN…TCENVDCGPG (74 aa)). 18 disulfides stabilise this stretch: Cys32–Cys55, Cys42–Cys88, Cys56–Cys91, Cys95–Cys106, Cys100–Cys116, Cys118–Cys150, Cys122–Cys143, Cys132–Cys164, Cys168–Cys179, Cys173–Cys189, Cys192–Cys225, Cys196–Cys218, Cys207–Cys239, Cys245–Cys256, Cys250–Cys267, Cys270–Cys302, Cys274–Cys295, and Cys284–Cys316. The 24-residue stretch at 94 to 117 (TCENVDCGPGKKCRMNKKNKPRCV) folds into the Follistatin-like 1 domain. Positions 112 to 166 (NKPRCVCAPDCSNITWKGLVCGLDGKTYRNECALLKARCKEQPELQVQYQGKCKK) constitute a Kazal-like 1 domain. The N-linked (GlcNAc...) asparagine glycan is linked to Asn124. A Follistatin-like 2 domain is found at 167–190 (TCRDVFCPGSSTCVVDQTNNAYCV). The region spanning 186–241 (NAYCVTCNRICPEPTSSEQYLCGNDGVTYPSACHLRKATCLLGRSIGLAYEGKCIK) is the Kazal-like 2 domain. A Follistatin-like 3 domain is found at 244–268 (SCDDIQCTGGKKCLWDFKVGRGRCS). In terms of domain architecture, Kazal-like 3 spans 261 to 318 (KVGRGRCSLCGELCPESKSEEPVCASDNATYASECAMKEAACSSGVLLEVKHSGSCNS). N-linked (GlcNAc...) asparagine glycosylation occurs at Asn288. The disordered stretch occupies residues 316 to 344 (CNSISEDTEDEEEDEDQDYSFPISSILEW). Residues 321–333 (EDTEDEEEDEDQD) are compositionally biased toward acidic residues.

As to quaternary structure, monomer.

Its subcellular location is the secreted. Functionally, binds directly to activin and functions as an activin antagonist. Specific inhibitor of the biosynthesis and secretion of pituitary follicle stimulating hormone (FSH). This is Follistatin from Bubalus bubalis (Domestic water buffalo).